Here is an 89-residue protein sequence, read N- to C-terminus: Aminoacyl carrier protein 2 (89 aa).

Positions 6 to 84 constitute a Carrier domain; that stretch reads INVQNRVLSV…AMERMILNQL (79 aa). Ser-42 is subject to O-(pantetheine 4'-phosphoryl)serine.

Post-translationally, 4'-phosphopantetheine is transferred from CoA to a specific serine of the apo-form of this carrier protein.

Aminoacyl carrier protein. Can be charged with L-glycine via the formation of a thioester bond between the amino acid and the 4'-phosphopantetheinyl prosthetic group, catalyzed by the bll6282 ligase. This is Aminoacyl carrier protein 2 from Bradyrhizobium diazoefficiens (strain JCM 10833 / BCRC 13528 / IAM 13628 / NBRC 14792 / USDA 110).